The primary structure comprises 307 residues: Acetaldehyde dehydrogenase 1 (307 aa).

Catalysis depends on Cys132, which acts as the Acyl-thioester intermediate. Residues 163–171 (SVGPGTRKN) and Asn274 each bind NAD(+).

This sequence belongs to the acetaldehyde dehydrogenase family.

The enzyme catalyses acetaldehyde + NAD(+) + CoA = acetyl-CoA + NADH + H(+). The chain is Acetaldehyde dehydrogenase 1 (tesF) from Comamonas testosteroni (Pseudomonas testosteroni).